Here is a 360-residue protein sequence, read N- to C-terminus: 3-isopropylmalate dehydrogenase (360 aa).

76–89 (GPKWDTIERDIRPE) is a binding site for NAD(+). Residues arginine 96, arginine 106, arginine 134, and aspartate 224 each contribute to the substrate site. Positions 224, 248, and 252 each coordinate Mg(2+). Position 282-294 (282-294 (GSAPDIAGKGIAN)) interacts with NAD(+).

Belongs to the isocitrate and isopropylmalate dehydrogenases family. LeuB type 1 subfamily. Homodimer. The cofactor is Mg(2+). Mn(2+) is required as a cofactor.

It localises to the cytoplasm. It carries out the reaction (2R,3S)-3-isopropylmalate + NAD(+) = 4-methyl-2-oxopentanoate + CO2 + NADH. It functions in the pathway amino-acid biosynthesis; L-leucine biosynthesis; L-leucine from 3-methyl-2-oxobutanoate: step 3/4. In terms of biological role, catalyzes the oxidation of 3-carboxy-2-hydroxy-4-methylpentanoate (3-isopropylmalate) to 3-carboxy-4-methyl-2-oxopentanoate. The product decarboxylates to 4-methyl-2 oxopentanoate. This chain is 3-isopropylmalate dehydrogenase, found in Pseudomonas savastanoi pv. phaseolicola (strain 1448A / Race 6) (Pseudomonas syringae pv. phaseolicola (strain 1448A / Race 6)).